The primary structure comprises 181 residues: Crustacyanin-C1 subunit (181 aa).

3 disulfide bridges follow: C12–C121, C51–C173, and C117–C150.

Belongs to the calycin superfamily. Lipocalin family. As to quaternary structure, oligomer; Can form dimers (beta-crustacyanin); or complexes of 16 subunits (alpha-crustacyanin). There are five types of subunits: A1, A2, A3, C1 and C2. In terms of tissue distribution, found in the carapace.

It is found in the secreted. The protein localises to the extracellular space. Binds the carotenoid astaxanthin (AXT) which provides the blue coloration to the carapace of the lobster. The polypeptide is Crustacyanin-C1 subunit (Homarus gammarus (European lobster)).